A 254-amino-acid chain; its full sequence is Hydroxyacylglutathione hydrolase (254 aa).

Residues histidine 54, histidine 56, aspartate 58, histidine 59, histidine 111, aspartate 130, and histidine 168 each contribute to the Zn(2+) site.

The protein belongs to the metallo-beta-lactamase superfamily. Glyoxalase II family. In terms of assembly, monomer. Zn(2+) serves as cofactor.

It catalyses the reaction an S-(2-hydroxyacyl)glutathione + H2O = a 2-hydroxy carboxylate + glutathione + H(+). It participates in secondary metabolite metabolism; methylglyoxal degradation; (R)-lactate from methylglyoxal: step 2/2. Thiolesterase that catalyzes the hydrolysis of S-D-lactoyl-glutathione to form glutathione and D-lactic acid. The polypeptide is Hydroxyacylglutathione hydrolase (Legionella pneumophila (strain Corby)).